A 926-amino-acid polypeptide reads, in one-letter code: Thyroid peroxidase (926 aa).

Residues 1–14 form the signal peptide; the sequence is MGARAVLGVTLAVA. The Extracellular segment spans residues 19–844; sequence FFASILRRKD…TCVDAGRLPR (826 aa). A glycan (N-linked (GlcNAc...) asparagine) is linked at Asn-129. A disulfide bond links Cys-142 and Cys-158. A heme b-binding site is contributed by Asp-238. The active-site Proton acceptor is His-239. Asp-240 serves as a coordination point for Ca(2+). 2 disulfides stabilise this stretch: Cys-259–Cys-269 and Cys-263–Cys-286. N-linked (GlcNAc...) asparagine glycans are attached at residues Asn-277 and Asn-307. Residues Thr-321, Phe-323, Asp-325, and Ser-327 each coordinate Ca(2+). Asn-342 carries N-linked (GlcNAc...) asparagine glycosylation. Heme b is bound by residues Glu-398 and His-493. 7 disulfides stabilise this stretch: Cys-596-Cys-653, Cys-694-Cys-719, Cys-740-Cys-780, Cys-766-Cys-792, Cys-798-Cys-812, Cys-806-Cys-821, and Cys-823-Cys-836. The region spanning 738-793 is the Sushi domain; that stretch reads DACGFPDPVEDGGFLLCEERGQRVLVFSCRHGFRLRGPAQITCTPRGWDSPPPLCK. Residues 794 to 837 form the EGF-like; calcium-binding domain; it reads DINECEDETDPPCHASARCKNTKGGVLCECSDPLVLGEDGRTCV. A helical membrane pass occupies residues 845-869; it reads ASVVSIALGAVLVCGLAGLAWTVVC. Over 870–926 the chain is Cytoplasmic; sequence RWTHADARPLLPVGEGEGDGKSPSLPLPGCGNRRDVGAAPALEVEQDLSCGSRGLCE.

Belongs to the peroxidase family. XPO subfamily. Interacts with DUOX1, DUOX2 and CYBA. Ca(2+) is required as a cofactor. The cofactor is heme b. Post-translationally, heme is covalently bound through a H(2)O(2)-dependent autocatalytic process. Heme insertion is important for the delivery of protein at the cell surface. Cleaved in its N-terminal part. In terms of processing, N-glycosylated; contains mannose and N-acetylglucosamine.

The protein localises to the membrane. It carries out the reaction 2 iodide + H2O2 + 2 H(+) = diiodine + 2 H2O. The enzyme catalyses [thyroglobulin]-L-tyrosine + iodide + H2O2 + H(+) = [thyroglobulin]-3-iodo-L-tyrosine + 2 H2O. It catalyses the reaction [thyroglobulin]-3-iodo-L-tyrosine + iodide + H2O2 + H(+) = [thyroglobulin]-3,5-diiodo-L-tyrosine + 2 H2O. The catalysed reaction is 2 [thyroglobulin]-3,5-diiodo-L-tyrosine + H2O2 = [thyroglobulin]-L-thyroxine + [thyroglobulin]-dehydroalanine + 2 H2O. It carries out the reaction [thyroglobulin]-3-iodo-L-tyrosine + [thyroglobulin]-3,5-diiodo-L-tyrosine + H2O2 = [thyroglobulin]-3,3',5-triiodo-L-thyronine + [thyroglobulin]-dehydroalanine + 2 H2O. It functions in the pathway hormone biosynthesis; thyroid hormone biosynthesis. Functionally, iodination and coupling of the hormonogenic tyrosines in thyroglobulin to yield the thyroid hormones T(3) and T(4). The chain is Thyroid peroxidase (TPO) from Sus scrofa (Pig).